The chain runs to 269 residues: Shikimate dehydrogenase (NADP(+)) (269 aa).

Residues 17-19 (SKS) and T64 contribute to the shikimate site. K68 functions as the Proton acceptor in the catalytic mechanism. E80 serves as a coordination point for NADP(+). Shikimate contacts are provided by N89 and D105. NADP(+) is bound by residues 130–134 (GAGGA), 154–159 (NRTHAK), and M213. Residue Y215 participates in shikimate binding. G237 contacts NADP(+).

The protein belongs to the shikimate dehydrogenase family. Homodimer.

It catalyses the reaction shikimate + NADP(+) = 3-dehydroshikimate + NADPH + H(+). It participates in metabolic intermediate biosynthesis; chorismate biosynthesis; chorismate from D-erythrose 4-phosphate and phosphoenolpyruvate: step 4/7. Involved in the biosynthesis of the chorismate, which leads to the biosynthesis of aromatic amino acids. Catalyzes the reversible NADPH linked reduction of 3-dehydroshikimate (DHSA) to yield shikimate (SA). This Neisseria cinerea protein is Shikimate dehydrogenase (NADP(+)).